The following is a 336-amino-acid chain: Fructose-1,6-bisphosphatase class 1 (336 aa).

The Mg(2+) site is built by Glu98, Asp117, Leu119, and Asp120. Substrate contacts are provided by residues 120-123 (DGSS), Asn210, and Lys276. Glu282 contacts Mg(2+).

The protein belongs to the FBPase class 1 family. Homotetramer. Mg(2+) is required as a cofactor.

The protein resides in the cytoplasm. The catalysed reaction is beta-D-fructose 1,6-bisphosphate + H2O = beta-D-fructose 6-phosphate + phosphate. The protein operates within carbohydrate biosynthesis; gluconeogenesis. The polypeptide is Fructose-1,6-bisphosphatase class 1 (Caulobacter vibrioides (strain ATCC 19089 / CIP 103742 / CB 15) (Caulobacter crescentus)).